A 225-amino-acid polypeptide reads, in one-letter code: Ribosomal RNA small subunit methyltransferase G (225 aa).

Residues Gly84, Phe89, Asp107 to Thr109, Ala135 to Glu136, and Arg154 each bind S-adenosyl-L-methionine.

This sequence belongs to the methyltransferase superfamily. RNA methyltransferase RsmG family.

It localises to the cytoplasm. Specifically methylates the N7 position of a guanine in 16S rRNA. The polypeptide is Ribosomal RNA small subunit methyltransferase G (Microcystis aeruginosa (strain NIES-843 / IAM M-2473)).